Consider the following 78-residue polypeptide: Large ribosomal subunit protein bL28 (78 aa).

The disordered stretch occupies residues 1 to 21 (MSRVCQVTGKRPVSGNNRSHA).

The protein belongs to the bacterial ribosomal protein bL28 family.

This Sodalis glossinidius (strain morsitans) protein is Large ribosomal subunit protein bL28.